A 366-amino-acid chain; its full sequence is NADH-quinone oxidoreductase subunit D (366 aa).

Belongs to the complex I 49 kDa subunit family. In terms of assembly, NDH-1 is composed of 14 different subunits. Subunits NuoB, C, D, E, F, and G constitute the peripheral sector of the complex.

It is found in the cell membrane. It carries out the reaction a quinone + NADH + 5 H(+)(in) = a quinol + NAD(+) + 4 H(+)(out). Functionally, NDH-1 shuttles electrons from NADH, via FMN and iron-sulfur (Fe-S) centers, to quinones in the respiratory chain. The immediate electron acceptor for the enzyme in this species is believed to be a menaquinone. Couples the redox reaction to proton translocation (for every two electrons transferred, four hydrogen ions are translocated across the cytoplasmic membrane), and thus conserves the redox energy in a proton gradient. The sequence is that of NADH-quinone oxidoreductase subunit D from Geobacillus thermodenitrificans (strain NG80-2).